The following is a 425-amino-acid chain: Multifunctional CCA protein (425 aa).

ATP is bound by residues Gly8 and Arg11. 2 residues coordinate CTP: Gly8 and Arg11. Positions 21 and 23 each coordinate Mg(2+). Residues Arg91, Arg137, and Arg140 each coordinate ATP. Positions 91, 137, and 140 each coordinate CTP. The 102-residue stretch at 228 to 329 (TGVHTLMVLD…VDLLDRLGAL (102 aa)) folds into the HD domain.

The protein belongs to the tRNA nucleotidyltransferase/poly(A) polymerase family. Bacterial CCA-adding enzyme type 1 subfamily. In terms of assembly, monomer. Can also form homodimers and oligomers. Mg(2+) is required as a cofactor. Requires Ni(2+) as cofactor.

The catalysed reaction is a tRNA precursor + 2 CTP + ATP = a tRNA with a 3' CCA end + 3 diphosphate. It carries out the reaction a tRNA with a 3' CCA end + 2 CTP + ATP = a tRNA with a 3' CCACCA end + 3 diphosphate. Its function is as follows. Catalyzes the addition and repair of the essential 3'-terminal CCA sequence in tRNAs without using a nucleic acid template. Adds these three nucleotides in the order of C, C, and A to the tRNA nucleotide-73, using CTP and ATP as substrates and producing inorganic pyrophosphate. tRNA 3'-terminal CCA addition is required both for tRNA processing and repair. Also involved in tRNA surveillance by mediating tandem CCA addition to generate a CCACCA at the 3' terminus of unstable tRNAs. While stable tRNAs receive only 3'-terminal CCA, unstable tRNAs are marked with CCACCA and rapidly degraded. This Methylococcus capsulatus (strain ATCC 33009 / NCIMB 11132 / Bath) protein is Multifunctional CCA protein.